The following is a 502-amino-acid chain: Facilitated trehalose transporter Tret1 (502 aa).

Over 1–38 (MGVENTKQTMSSQNIKPAKDSDDVLHTQFKEVKRSPMR) the chain is Cytoplasmic. Residues 39–59 (YTMQLLAALAVSMASLMIGYS) traverse the membrane as a helical segment. The Extracellular portion of the chain corresponds to 60–83 (SSYTSPALVSMRDNTTATFEVTMD). Residue Asn73 is glycosylated (N-linked (GlcNAc...) asparagine). The helical transmembrane segment at 84 to 104 (MAMWIGSIMPLSALIGGIIGG) threads the bilayer. The Cytoplasmic segment spans residues 105-120 (PCIEYIGRRNTILSTA). The helical transmembrane segment at 121–141 (LPFLAGWLFIALATNVAMILV) threads the bilayer. At 142–144 (GRS) the chain is on the extracellular side. A helical transmembrane segment spans residues 145-165 (ICGFCVGVASLSLPVYLGESI). Topologically, residues 166–172 (QPEVRGS) are cytoplasmic. The chain crosses the membrane as a helical span at residues 173–193 (LGLLPTVFGNSGILMCFTAGM). Over 194–199 (YLAWRN) the chain is Extracellular. The helical transmembrane segment at 200–220 (LALLGACIPIIFLILMFLIPE) threads the bilayer. Over 221-282 (TPRWYISKGK…ELFRKNHIKP (62 aa)) the chain is Cytoplasmic. Residues 283–303 (VFISLGLMFFQQFSGINAVIF) form a helical membrane-spanning segment. Residues 304 to 319 (YTVQIFKDSGSTVDEN) lie on the Extracellular side of the membrane. N-linked (GlcNAc...) asparagine glycosylation occurs at Asn319. The chain crosses the membrane as a helical span at residues 320–340 (LSTIIVGLVNFISTFVAAMII). The Cytoplasmic segment spans residues 341–346 (DRLGRK). The helical transmembrane segment at 347-367 (MLLYISSILMCITLFTFGTFF) threads the bilayer. The Extracellular segment spans residues 368-376 (YVKELMDVT). Residues 377–397 (AFGWIPLMSLIVYVIGFSFGF) form a helical membrane-spanning segment. The Cytoplasmic portion of the chain corresponds to 398-410 (GPIPWLMMGEILP). A helical membrane pass occupies residues 411–433 (VKIRGTAASVATAFNWSCTFVVT). Over 434–446 (KTYEDLVLHIGPY) the chain is Extracellular. Residues 447–467 (GTFWLFGTLVAVAFIFVIICV) traverse the membrane as a helical segment. Over 468-502 (PETRGRSLEEIERRFAGPVRRTSAIANLKPMPITI) the chain is Cytoplasmic.

It belongs to the major facilitator superfamily. Sugar transporter (TC 2.A.1.1) family. Trehalose transporter subfamily.

Its subcellular location is the cell membrane. Functionally, moderate-capacity facilitative transporter for trehalose. Does not transport maltose, sucrose or lactose. Mediates the bidirectional transfer of trehalose. Responsible for the transport of trehalose synthesized in the fat body and the incorporation of trehalose into other tissues that require a carbon source, thereby regulating trehalose levels in the hemolymph. This Apis mellifera ligustica (Common honeybee) protein is Facilitated trehalose transporter Tret1.